The following is a 63-amino-acid chain: DNA-directed RNA polymerase 7 kDa subunit (63 aa).

Belongs to the poxviridae DNA-directed RNA polymerase 7 kDa subunit family. In terms of assembly, the DNA-dependent RNA polymerase used for intermediate and late genes expression consists of eight subunits 147 kDa, 133 kDa, 35 kDa, 30 kDa, 22 kDa, 19 kDa, 18 kDa and 7 kDa totalling more than 500 kDa in mass. The same holoenzyme, with the addition of the transcription-specificity factor RAP94, is used for early gene expression.

It localises to the virion. The enzyme catalyses RNA(n) + a ribonucleoside 5'-triphosphate = RNA(n+1) + diphosphate. In terms of biological role, part of the DNA-dependent RNA polymerase which catalyzes the transcription of viral DNA into RNA using the four ribonucleoside triphosphates as substrates. Responsible for the transcription of early, intermediate and late genes. DNA-dependent RNA polymerase associates with the early transcription factor (ETF) thereby allowing the early genes transcription. Late transcription, and probably also intermediate transcription, require newly synthesized RNA polymerase. The polypeptide is DNA-directed RNA polymerase 7 kDa subunit (RPO7) (Fowlpox virus (strain NVSL) (FPV)).